We begin with the raw amino-acid sequence, 69 residues long: DNA gyrase inhibitor YacG (69 aa).

Zn(2+)-binding residues include C13, C16, C32, and C36.

The protein belongs to the DNA gyrase inhibitor YacG family. Interacts with GyrB. Zn(2+) is required as a cofactor.

Its function is as follows. Inhibits all the catalytic activities of DNA gyrase by preventing its interaction with DNA. Acts by binding directly to the C-terminal domain of GyrB, which probably disrupts DNA binding by the gyrase. The polypeptide is DNA gyrase inhibitor YacG (Neisseria gonorrhoeae (strain ATCC 700825 / FA 1090)).